Consider the following 234-residue polypeptide: uncharacterized protein (234 aa).

An L-glutamine-binding site is contributed by 68–70; sequence GES. Residue Cys101 is the Nucleophile of the active site. L-glutamine contacts are provided by residues Arg131 and 167-168; that span reads IR. Residues His208 and Glu210 each act as charge relay system in the active site.

It belongs to the glutaminase PdxT/SNO family.

The protein resides in the cytoplasm. It carries out the reaction L-glutamine + H2O = L-glutamate + NH4(+). This is an uncharacterized protein from Schizosaccharomyces pombe (strain 972 / ATCC 24843) (Fission yeast).